A 424-amino-acid chain; its full sequence is UDP-N-acetylglucosamine 1-carboxyvinyltransferase (424 aa).

22–23 (KN) lines the phosphoenolpyruvate pocket. Arg93 is a UDP-N-acetyl-alpha-D-glucosamine binding site. Cys117 acts as the Proton donor in catalysis. Residue Cys117 is modified to 2-(S-cysteinyl)pyruvic acid O-phosphothioketal. Residues 162–165 (KVSV), Asp307, and Ile329 contribute to the UDP-N-acetyl-alpha-D-glucosamine site.

This sequence belongs to the EPSP synthase family. MurA subfamily.

Its subcellular location is the cytoplasm. The catalysed reaction is phosphoenolpyruvate + UDP-N-acetyl-alpha-D-glucosamine = UDP-N-acetyl-3-O-(1-carboxyvinyl)-alpha-D-glucosamine + phosphate. It functions in the pathway cell wall biogenesis; peptidoglycan biosynthesis. Its function is as follows. Cell wall formation. Adds enolpyruvyl to UDP-N-acetylglucosamine. This Glaesserella parasuis serovar 5 (strain SH0165) (Haemophilus parasuis) protein is UDP-N-acetylglucosamine 1-carboxyvinyltransferase.